Reading from the N-terminus, the 592-residue chain is Anaphase-promoting complex subunit 8 (592 aa).

TPR repeat units lie at residues 66-99 (EYYKYILAKNYFDLKEYRRCSDVLIDCNKYQLPI), 160-193 (QQQQQQQQQKIEQCQEFKQLFQFYKKLYIENKKD), 291-324 (TYILAQTAIGNYNLRAYDIGEELFERLIELEPNR), 359-392 (PETCCIIGNYYSLKLEHDKAILYFQRALKLNDRY), 393-426 (LSAWTLIGHEFLEIKNVSAAINAYRKAVDINPRD), 428-460 (RAWYGLGQTYQLLKLPLYSLYYFKKATTLRPYD), 461-494 (PRMWCAAGGCYEFIERIPEAIKCYERAEENYDRE), and 496-528 (VAINKLAKLYQEIQNNEKAAFYYKKNLYYCDQE). The tract at residues 129 to 166 (QQQAQQQAQQAQQESQQNDKNNDTNNNNKTDQQQQQQQ) is disordered.

The protein belongs to the APC8/CDC23 family. In terms of assembly, the APC/C is composed of at least 13 subunits that stay tightly associated throughout the cell cycle: anapc1, anapc2, anapc3, anapc4, anapc5, anapc6, anapc7, anapc8, anapc10, anapc11, cdc20, cdc26 and cdh1.

It localises to the nucleus. Its pathway is protein modification; protein ubiquitination. Functionally, component of the anaphase promoting complex/cyclosome (APC/C), a cell cycle-regulated E3 ubiquitin-protein ligase complex that controls progression through mitosis and the G1 phase of the cell cycle. The chain is Anaphase-promoting complex subunit 8 (anapc8) from Dictyostelium discoideum (Social amoeba).